Consider the following 361-residue polypeptide: Cdc42 effector protein 1 (361 aa).

The interval 1–29 (MPGPQGAGGAPAMNLGKLSPVGWVSSSQG) is disordered. 2 positions are modified to phosphoserine: serine 19 and serine 27. Phosphothreonine is present on threonine 34. In terms of domain architecture, CRIB spans 38–52 (ISPPLGDFRHTMHVG). Residue serine 39 is modified to Phosphoserine. An Omega-N-methylarginine modification is found at arginine 53. Residues serine 65, serine 73, serine 77, serine 101, serine 113, serine 121, serine 139, serine 180, serine 190, serine 192, and serine 195 each carry the phosphoserine modification. The interval 161–186 (CTISRLPRPEKPRDRDRDSSFPAEPE) is disordered. The span at 167–186 (PRPEKPRDRDRDSSFPAEPE) shows a compositional bias: basic and acidic residues. 2 disordered regions span residues 218–300 (EGSA…SRHH) and 320–361 (SWGS…EVKV). Tandem repeats lie at residues 220-226 (SAAETPA), 229-235 (PAASPPA), 236-242 (SVANPPA), and 243-249 (PASSPSL). The 4 X 7 AA tandem repeats of [PT]-[AT]-A-[ENT]-[PT]-[PTS]-[AG] stretch occupies residues 220–249 (SAAETPAPAPAASPPASVANPPAPASSPSL). Phosphoserine occurs at positions 270, 320, and 323. A compositionally biased stretch (polar residues) spans 332 to 347 (QAGSRTPVPSTVQANT). Residues 351 to 361 (ADAEEDDEVKV) show a composition bias toward acidic residues.

It belongs to the BORG/CEP family. As to quaternary structure, interacts with RHOQ and CDC42, in a GTP-dependent manner.

Its subcellular location is the endomembrane system. It localises to the cytoplasm. The protein localises to the cytoskeleton. Its function is as follows. Probably involved in the organization of the actin cytoskeleton. Induced membrane extensions in fibroblasts. The chain is Cdc42 effector protein 1 from Bos taurus (Bovine).